Here is a 103-residue protein sequence, read N- to C-terminus: Pseudonajatoxin b homolog (103 aa).

Positions 1–21 are cleaved as a signal peptide; sequence MKTLLLTLVVVTIVCLDLGYT. Intrachain disulfides connect Cys-24–Cys-42, Cys-35–Cys-63, Cys-48–Cys-52, Cys-67–Cys-79, and Cys-80–Cys-85.

This sequence belongs to the three-finger toxin family. Long-chain subfamily. Type II alpha-neurotoxin sub-subfamily. In terms of tissue distribution, expressed by the venom gland.

It is found in the secreted. Functionally, binds with high affinity to muscular (alpha-1/CHRNA1) and neuronal (alpha-7/CHRNA7) nicotinic acetylcholine receptor (nAChR) and inhibits acetylcholine from binding to the receptor, thereby impairing neuromuscular and neuronal transmission. This chain is Pseudonajatoxin b homolog, found in Pseudonaja textilis (Eastern brown snake).